Here is a 310-residue protein sequence, read N- to C-terminus: Malate dehydrogenase (310 aa).

NAD(+) is bound by residues G7–G12 and D32. Residues R81 and R87 each coordinate substrate. NAD(+) is bound by residues N94 and V117 to N119. Residues N119 and R150 each coordinate substrate. The active-site Proton acceptor is the H174.

Belongs to the LDH/MDH superfamily. MDH type 3 family. In terms of assembly, homotetramer; arranged as a dimer of dimers.

It carries out the reaction (S)-malate + NAD(+) = oxaloacetate + NADH + H(+). Catalyzes the reversible oxidation of malate to oxaloacetate. The polypeptide is Malate dehydrogenase (Chlorobaculum tepidum (strain ATCC 49652 / DSM 12025 / NBRC 103806 / TLS) (Chlorobium tepidum)).